The primary structure comprises 91 residues: MKISAAALTIILTAAALCTPAPASPYGSDTTPCCFAYLSLALPRAHVKEYFYTSSKCSNLAVVFVTRRNRQVCANPEKKWVQEYINYLEMS.

An N-terminal signal peptide occupies residues 1–23 (MKISAAALTIILTAAALCTPAPA). 2 disulfides stabilise this stretch: Cys-33-Cys-57 and Cys-34-Cys-73.

Belongs to the intercrine beta (chemokine CC) family. In terms of tissue distribution, T-cell and macrophage specific.

It is found in the secreted. Functionally, chemoattractant for blood monocytes, memory T-helper cells and eosinophils. Causes the release of histamine from basophils and activates eosinophils. May activate several chemokine receptors including CCR1, CCR3, CCR4 and CCR5. May also be an agonist of the G protein-coupled receptor GPR75. Together with GPR75, may play a role in neuron survival through activation of a downstream signaling pathway involving the PI3, Akt and MAP kinases. By activating GPR75 may also play a role in insulin secretion by islet cells. This chain is C-C motif chemokine 5 (Ccl5), found in Mus musculus (Mouse).